We begin with the raw amino-acid sequence, 254 residues long: 4-hydroxy-tetrahydrodipicolinate reductase (254 aa).

NAD(+) is bound by residues 10 to 15 (GATGKV) and 101 to 103 (GTT). The Proton donor/acceptor role is filled by histidine 157. Histidine 158 contributes to the (S)-2,3,4,5-tetrahydrodipicolinate binding site. Catalysis depends on lysine 161, which acts as the Proton donor. Residue 167–168 (GT) participates in (S)-2,3,4,5-tetrahydrodipicolinate binding.

It belongs to the DapB family.

It localises to the cytoplasm. The enzyme catalyses (S)-2,3,4,5-tetrahydrodipicolinate + NAD(+) + H2O = (2S,4S)-4-hydroxy-2,3,4,5-tetrahydrodipicolinate + NADH + H(+). The catalysed reaction is (S)-2,3,4,5-tetrahydrodipicolinate + NADP(+) + H2O = (2S,4S)-4-hydroxy-2,3,4,5-tetrahydrodipicolinate + NADPH + H(+). The protein operates within amino-acid biosynthesis; L-lysine biosynthesis via DAP pathway; (S)-tetrahydrodipicolinate from L-aspartate: step 4/4. Functionally, catalyzes the conversion of 4-hydroxy-tetrahydrodipicolinate (HTPA) to tetrahydrodipicolinate. The sequence is that of 4-hydroxy-tetrahydrodipicolinate reductase from Symbiobacterium thermophilum (strain DSM 24528 / JCM 14929 / IAM 14863 / T).